The following is an 835-amino-acid chain: Ribonuclease R (835 aa).

One can recognise an RNB domain in the interval 267–593 (RVDLRELPLV…LLHRAIKYLI (327 aa)). The S1 motif domain maps to 652–733 (GDELEGVIAN…DDKQIDFELV (82 aa)). Residues 739–754 (LRGEGKTAKKRAAEAK) are compositionally biased toward basic and acidic residues. Residues 739–835 (LRGEGKTAKK…KTKRTKQDAQ (97 aa)) are disordered. A compositionally biased stretch (basic residues) spans 755–764 (RKAKEKKRAA). Positions 765 to 777 (TRSSSKESATARA) are enriched in low complexity. The span at 783 to 793 (PTKRPEQTDSG) shows a compositional bias: basic and acidic residues. The segment covering 809–829 (KPKVKKAHKKKPHSKPKKTKR) has biased composition (basic residues).

It belongs to the RNR ribonuclease family. RNase R subfamily.

The protein resides in the cytoplasm. The catalysed reaction is Exonucleolytic cleavage in the 3'- to 5'-direction to yield nucleoside 5'-phosphates.. Its function is as follows. 3'-5' exoribonuclease that releases 5'-nucleoside monophosphates and is involved in maturation of structured RNAs. The polypeptide is Ribonuclease R (Vibrio parahaemolyticus serotype O3:K6 (strain RIMD 2210633)).